Here is a 194-residue protein sequence, read N- to C-terminus: Peptidyl-tRNA hydrolase (194 aa).

TRNA is bound at residue Y16. The Proton acceptor role is filled by H21. Residues F67, N69, and N115 each coordinate tRNA.

It belongs to the PTH family. As to quaternary structure, monomer.

It is found in the cytoplasm. The catalysed reaction is an N-acyl-L-alpha-aminoacyl-tRNA + H2O = an N-acyl-L-amino acid + a tRNA + H(+). In terms of biological role, hydrolyzes ribosome-free peptidyl-tRNAs (with 1 or more amino acids incorporated), which drop off the ribosome during protein synthesis, or as a result of ribosome stalling. Catalyzes the release of premature peptidyl moieties from peptidyl-tRNA molecules trapped in stalled 50S ribosomal subunits, and thus maintains levels of free tRNAs and 50S ribosomes. The polypeptide is Peptidyl-tRNA hydrolase (Shigella dysenteriae serotype 1 (strain Sd197)).